Consider the following 173-residue polypeptide: Photosystem I reaction center subunit XI (173 aa).

Helical transmembrane passes span leucine 92–tyrosine 112 and leucine 148–isoleucine 168.

The protein belongs to the PsaL family.

Its subcellular location is the cellular thylakoid membrane. In Nostoc punctiforme (strain ATCC 29133 / PCC 73102), this protein is Photosystem I reaction center subunit XI.